A 333-amino-acid chain; its full sequence is MATIKDVAKMAGVSTTTVSHVINKTRFVAKETEQQVLQAIKNLNYSPSAVARSLKVNTTKSIGMIVTTCETPYFAEIIHSVEELCYRQGYSLFLCNTQNNPEKIKNHLDMLAKKRVDGLLVMCAEYTQNSLNLLAAFEDLPMVVMDWGPFNENTDLIQDNSFSGGYIATKYLIDNGHKDIAIISGELKKTTAVMRYQGFEKAMQEANLAINPDWIMEGFFEPEDGYECMNKILVQDKLPTAVFCCNDVMALGAISAIGEKSLKVPDDISVIGYDNIHASRFFSPPLTTIHQSKSRLGVQAINLLFKRISEKGKEHEIIEIYPELVIRKSVKTL.

One can recognise an HTH lacI-type domain in the interval 2 to 56 (ATIKDVAKMAGVSTTTVSHVINKTRFVAKETEQQVLQAIKNLNYSPSAVARSLKV). The segment at residues 4–23 (IKDVAKMAGVSTTTVSHVIN) is a DNA-binding region (H-T-H motif). A DNA-binding region spans residues 48-56 (SAVARSLKV). Hypoxanthine is bound by residues Y73, K189, T191, F220, and D274.

In terms of assembly, homodimer.

It participates in purine metabolism; purine nucleotide biosynthesis [regulation]. Is the main repressor of the genes involved in the de novo synthesis of purine nucleotides, regulating purB, purC, purEK, purF, purHD, purL, purMN and guaBA expression. PurR is allosterically activated to bind its cognate DNA by binding the purine corepressors, hypoxanthine or guanine, thereby effecting transcription repression. The protein is HTH-type transcriptional repressor PurR of Histophilus somni (strain 2336) (Haemophilus somnus).